We begin with the raw amino-acid sequence, 525 residues long: Glutamate--cysteine ligase (525 aa).

Belongs to the glutamate--cysteine ligase type 1 family. Type 1 subfamily.

It carries out the reaction L-cysteine + L-glutamate + ATP = gamma-L-glutamyl-L-cysteine + ADP + phosphate + H(+). It functions in the pathway sulfur metabolism; glutathione biosynthesis; glutathione from L-cysteine and L-glutamate: step 1/2. The protein is Glutamate--cysteine ligase of Pseudomonas putida (strain ATCC 47054 / DSM 6125 / CFBP 8728 / NCIMB 11950 / KT2440).